We begin with the raw amino-acid sequence, 679 residues long: UvrABC system protein B (679 aa).

Positions 31-414 constitute a Helicase ATP-binding domain; sequence ENLTDGLAHQ…ELEKSGSEII (384 aa). 44-51 provides a ligand contact to ATP; the sequence is GVTGSGKT. The Beta-hairpin signature appears at 97–120; it reads YYDYYQPEAYVPSSDTFIEKDASI. Positions 436–589 constitute a Helicase C-terminal domain; sequence QVDDLLSEAR…QTKYNEEHGI (154 aa). Residues 639-674 enclose the UVR domain; the sequence is QQQIKKLEQQMYKFAQDLEFEKAAAIRDQLHQLREQ.

This sequence belongs to the UvrB family. As to quaternary structure, forms a heterotetramer with UvrA during the search for lesions. Interacts with UvrC in an incision complex.

The protein localises to the cytoplasm. Functionally, the UvrABC repair system catalyzes the recognition and processing of DNA lesions. A damage recognition complex composed of 2 UvrA and 2 UvrB subunits scans DNA for abnormalities. Upon binding of the UvrA(2)B(2) complex to a putative damaged site, the DNA wraps around one UvrB monomer. DNA wrap is dependent on ATP binding by UvrB and probably causes local melting of the DNA helix, facilitating insertion of UvrB beta-hairpin between the DNA strands. Then UvrB probes one DNA strand for the presence of a lesion. If a lesion is found the UvrA subunits dissociate and the UvrB-DNA preincision complex is formed. This complex is subsequently bound by UvrC and the second UvrB is released. If no lesion is found, the DNA wraps around the other UvrB subunit that will check the other stand for damage. In Haemophilus influenzae (strain ATCC 51907 / DSM 11121 / KW20 / Rd), this protein is UvrABC system protein B.